Consider the following 213-residue polypeptide: Probable GH family 25 lysozyme 4 (213 aa).

The first 19 residues, 1-19, serve as a signal peptide directing secretion; sequence MRLFLLLITFIALFGAINA. Positions 21–213 constitute a Ch-type lysozyme domain; sequence SGVDISQGSS…VGYDFNWYPN (193 aa). Catalysis depends on residues aspartate 24, aspartate 112, and glutamate 114.

This sequence belongs to the glycosyl hydrolase 25 family.

The protein localises to the secreted. It carries out the reaction Hydrolysis of (1-&gt;4)-beta-linkages between N-acetylmuramic acid and N-acetyl-D-glucosamine residues in a peptidoglycan and between N-acetyl-D-glucosamine residues in chitodextrins.. The chain is Probable GH family 25 lysozyme 4 from Dictyostelium discoideum (Social amoeba).